The primary structure comprises 332 residues: Holliday junction branch migration complex subunit RuvB (332 aa).

Positions 1–181 (MARILDNDVM…FGITGHMEYY (181 aa)) are large ATPase domain (RuvB-L). Residues L20, R21, G62, K65, T66, T67, 128 to 130 (EDF), R171, Y181, and R218 each bind ATP. T66 provides a ligand contact to Mg(2+). A small ATPAse domain (RuvB-S) region spans residues 182 to 252 (QEKDLTEIVE…ITDRALTMLD (71 aa)). Positions 255–332 (REGLDYIDQK…RHLGYPYQNT (78 aa)) are head domain (RuvB-H). DNA is bound by residues R291, R310, R312, and R315.

Belongs to the RuvB family. Homohexamer. Forms an RuvA(8)-RuvB(12)-Holliday junction (HJ) complex. HJ DNA is sandwiched between 2 RuvA tetramers; dsDNA enters through RuvA and exits via RuvB. An RuvB hexamer assembles on each DNA strand where it exits the tetramer. Each RuvB hexamer is contacted by two RuvA subunits (via domain III) on 2 adjacent RuvB subunits; this complex drives branch migration. In the full resolvosome a probable DNA-RuvA(4)-RuvB(12)-RuvC(2) complex forms which resolves the HJ.

The protein localises to the cytoplasm. The enzyme catalyses ATP + H2O = ADP + phosphate + H(+). Functionally, the RuvA-RuvB-RuvC complex processes Holliday junction (HJ) DNA during genetic recombination and DNA repair, while the RuvA-RuvB complex plays an important role in the rescue of blocked DNA replication forks via replication fork reversal (RFR). RuvA specifically binds to HJ cruciform DNA, conferring on it an open structure. The RuvB hexamer acts as an ATP-dependent pump, pulling dsDNA into and through the RuvAB complex. RuvB forms 2 homohexamers on either side of HJ DNA bound by 1 or 2 RuvA tetramers; 4 subunits per hexamer contact DNA at a time. Coordinated motions by a converter formed by DNA-disengaged RuvB subunits stimulates ATP hydrolysis and nucleotide exchange. Immobilization of the converter enables RuvB to convert the ATP-contained energy into a lever motion, pulling 2 nucleotides of DNA out of the RuvA tetramer per ATP hydrolyzed, thus driving DNA branch migration. The RuvB motors rotate together with the DNA substrate, which together with the progressing nucleotide cycle form the mechanistic basis for DNA recombination by continuous HJ branch migration. Branch migration allows RuvC to scan DNA until it finds its consensus sequence, where it cleaves and resolves cruciform DNA. The sequence is that of Holliday junction branch migration complex subunit RuvB from Streptococcus pyogenes serotype M3 (strain ATCC BAA-595 / MGAS315).